The primary structure comprises 23 residues: Potassium channel toxin alpha-KTx 13.3 (23 aa).

Cystine bridges form between Cys2-Cys15, Cys5-Cys20, and Cys9-Cys22. The interval 13–20 is interaction with Ca(2+)-activated K(+) channels; that stretch reads GKCINGRC. Tyr23 is subject to Tyrosine amide.

Expressed by the venom gland.

The protein resides in the secreted. Its function is as follows. Reversibly blocks Shaker B potassium channels, with a dissociation constant of 200 nM. This is Potassium channel toxin alpha-KTx 13.3 from Tityus pachyurus (Colombian scorpion).